The primary structure comprises 391 residues: Sulfate adenylyltransferase (391 aa).

It belongs to the sulfate adenylyltransferase family.

It carries out the reaction sulfate + ATP + H(+) = adenosine 5'-phosphosulfate + diphosphate. The protein operates within sulfur metabolism; hydrogen sulfide biosynthesis; sulfite from sulfate: step 1/3. The protein is Sulfate adenylyltransferase of Lactiplantibacillus plantarum (strain ATCC BAA-793 / NCIMB 8826 / WCFS1) (Lactobacillus plantarum).